Reading from the N-terminus, the 253-residue chain is Trypsin delta (253 aa).

Positions 1 to 22 are cleaved as a signal peptide; that stretch reads MLKFVILLSAVACALGGTIPEG. Positions 23 to 30 are cleaved as a propeptide — activation peptide; that stretch reads LLPQLDGR. The Peptidase S1 domain maps to 31-253; the sequence is IVGGTATTIS…DLRAWVVRNA (223 aa). A disulfide bond links cysteine 56 and cysteine 72. Residues histidine 71 and aspartate 116 each act as charge relay system in the active site. Intrachain disulfides connect cysteine 180/cysteine 197 and cysteine 206/cysteine 230. Residue serine 210 is the Charge relay system of the active site.

The protein belongs to the peptidase S1 family.

The protein resides in the secreted. It is found in the extracellular space. The enzyme catalyses Preferential cleavage: Arg-|-Xaa, Lys-|-Xaa.. This Drosophila erecta (Fruit fly) protein is Trypsin delta.